The sequence spans 667 residues: Probable sulfate permease C320.05 (667 aa).

The tract at residues 1–27 is disordered; that stretch reads MSSPSENHLLGPKTSFIDNRTSTSRPL. The segment covering 16 to 25 has biased composition (polar residues); that stretch reads FIDNRTSTSR. 12 consecutive transmembrane segments (helical) span residues 77 to 97, 102 to 122, 162 to 182, 198 to 218, 240 to 260, 275 to 295, 301 to 321, 336 to 356, 368 to 388, 405 to 425, 433 to 453, and 465 to 485; these read IIWD…IALS, FLGV…ILYC, ILVT…AGLF, GCIL…FFGF, MSKA…LLIG, IVSI…SKKF, YGIA…LPLP, GVMC…AISL, LISL…PICG, VATI…MPVF, LASM…VEIF, and GIIF…GIIF. The STAS domain maps to 532 to 657; sequence SSTAVESAPR…DHVQDSIKKV (126 aa).

This sequence belongs to the SLC26A/SulP transporter (TC 2.A.53) family.

The protein localises to the endoplasmic reticulum membrane. In terms of biological role, possible sulfate transporter. This chain is Probable sulfate permease C320.05, found in Schizosaccharomyces pombe (strain 972 / ATCC 24843) (Fission yeast).